The chain runs to 188 residues: UPF0200 protein YG5714_1176 (188 aa).

15-22 (GMPGSGKS) provides a ligand contact to ATP.

The protein belongs to the UPF0200 family.

This chain is UPF0200 protein YG5714_1176, found in Saccharolobus islandicus (strain Y.G.57.14 / Yellowstone #1) (Sulfolobus islandicus).